An 855-amino-acid polypeptide reads, in one-letter code: Probable inactive ATP-dependent zinc metalloprotease FTSHI 4, chloroplastic (855 aa).

A chloroplast-targeting transit peptide spans 1–78; sequence MTFYISSSLT…SFESTESSVS (78 aa). The chain crosses the membrane as a helical span at residues 242-262; it reads VATFVVWSMRLALFVSLYVWI. Residue 356 to 363 coordinates ATP; that stretch reads GPPGTGKT.

Belongs to the AAA ATPase family. Homooligomer. Interacts with FtsHi2. Ubiquitous but preferentially expressed in young leaves.

The protein resides in the plastid. It is found in the chloroplast thylakoid membrane. Functionally, functions in chloroplast biogenesis and chloroplast division. Required for plastid development during embryogenesis. Might be involved in chaperone functions or play a structural role in the thylakoid FtsH complex. This chain is Probable inactive ATP-dependent zinc metalloprotease FTSHI 4, chloroplastic, found in Arabidopsis thaliana (Mouse-ear cress).